The following is a 302-amino-acid chain: Methionyl-tRNA formyltransferase (302 aa).

Residue 108–111 (SILP) participates in (6S)-5,6,7,8-tetrahydrofolate binding.

This sequence belongs to the Fmt family.

The enzyme catalyses L-methionyl-tRNA(fMet) + (6R)-10-formyltetrahydrofolate = N-formyl-L-methionyl-tRNA(fMet) + (6S)-5,6,7,8-tetrahydrofolate + H(+). Functionally, attaches a formyl group to the free amino group of methionyl-tRNA(fMet). The formyl group appears to play a dual role in the initiator identity of N-formylmethionyl-tRNA by promoting its recognition by IF2 and preventing the misappropriation of this tRNA by the elongation apparatus. The chain is Methionyl-tRNA formyltransferase from Sulfurimonas denitrificans (strain ATCC 33889 / DSM 1251) (Thiomicrospira denitrificans (strain ATCC 33889 / DSM 1251)).